The following is a 426-amino-acid chain: Enolase (426 aa).

Glutamine 163 lines the (2R)-2-phosphoglycerate pocket. Residue glutamate 205 is the Proton donor of the active site. Mg(2+) is bound by residues aspartate 242, glutamate 283, and aspartate 310. Residues lysine 335, arginine 364, serine 365, and lysine 386 each coordinate (2R)-2-phosphoglycerate. Residue lysine 335 is the Proton acceptor of the active site.

Belongs to the enolase family. It depends on Mg(2+) as a cofactor.

The protein localises to the cytoplasm. The protein resides in the secreted. Its subcellular location is the cell surface. It catalyses the reaction (2R)-2-phosphoglycerate = phosphoenolpyruvate + H2O. The protein operates within carbohydrate degradation; glycolysis; pyruvate from D-glyceraldehyde 3-phosphate: step 4/5. In terms of biological role, catalyzes the reversible conversion of 2-phosphoglycerate (2-PG) into phosphoenolpyruvate (PEP). It is essential for the degradation of carbohydrates via glycolysis. The chain is Enolase from Aquifex aeolicus (strain VF5).